Reading from the N-terminus, the 204-residue chain is N-(5'-phosphoribosyl)anthranilate isomerase (204 aa).

It belongs to the TrpF family.

The catalysed reaction is N-(5-phospho-beta-D-ribosyl)anthranilate = 1-(2-carboxyphenylamino)-1-deoxy-D-ribulose 5-phosphate. It participates in amino-acid biosynthesis; L-tryptophan biosynthesis; L-tryptophan from chorismate: step 3/5. The chain is N-(5'-phosphoribosyl)anthranilate isomerase from Bacillus cereus (strain ZK / E33L).